A 293-amino-acid chain; its full sequence is Dioxygenase cdmA (293 aa).

Fe cation-binding residues include histidine 135, aspartate 137, and histidine 212.

Belongs to the PhyH family. Homodimer. It depends on Fe cation as a cofactor.

The catalysed reaction is chrodrimanin C + 2-oxoglutarate + O2 = verruculide A + succinate + CO2 + H2O. It carries out the reaction chrodrimanin H + 2-oxoglutarate + O2 = chrodrimanin E + succinate + CO2 + H2O. Its pathway is secondary metabolite biosynthesis; terpenoid biosynthesis. In terms of biological role, dioxygenase; part of the gene cluster that mediates the biosynthesis of chrodrimanin B, a meroterpenoid that acts as a potent blocker of insect GABA-gated chloride channels. The first step of the pathway is the biosynthesis of 6-hydroxymellein by the polyketide synthase cdmE. The prenyltransferase cdmH acts as a 6-hydroxymellein 5-farnesyltransferase and produces the hydrophobic metabolite verruculide C. The FAD-dependent monooxygenase cdmI further converts verruculide C into verruculide B. The terpene cyclase cdmG then produced the pentacyclic molecule 3-hydroxypentacecilide A, the backbone structure of chrodrimanin B, via folding the farnesyl moiety of the substrate into the chair-boat conformation. The short-chain dehydrogenase/reductase cdmF functions as the 3-OH dehydrogenase that oxidizes the C-3 hydroxyl group of 3-hydroxypentacecilide A and produces chrodrimanin C, the dehydrogenated product of 3-hydroxypentacecilide A. The cytochrome P450 monooxygenase cdmJ then accepts both 3-hydroxypentacecilide A and chrodrimanin C and functions as a C-7-beta-hydroxylase to produce respectively chrodrimanin H and chrodrimanin F. The dioxygenase cdmA accepts chrodrimanin H to afford chrodrimanin E, which is further transformed to chrodrimanin A by the dioxygenase cdmD. CdmA can also accept chrodrimanin C as substrate to convert it into verruculide A, which is further converted into chrodrimanin T by cdmD. The last step of the biosynthesis is proposed to be performed by the acetyltransferase cdmC which acetylates chrodrimanin A to yield chrodrimanin B. The pathway may also lead to the production of additional shunt products, including chrodrimanins T and U. The polypeptide is Dioxygenase cdmA (Talaromyces verruculosus (Penicillium verruculosum)).